A 193-amino-acid chain; its full sequence is Large ribosomal subunit protein uL18 (193 aa).

Belongs to the universal ribosomal protein uL18 family. In terms of assembly, part of the 50S ribosomal subunit. Contacts the 5S and 23S rRNAs.

This is one of the proteins that bind and probably mediate the attachment of the 5S RNA into the large ribosomal subunit, where it forms part of the central protuberance. The chain is Large ribosomal subunit protein uL18 from Methanococcus maripaludis (strain C6 / ATCC BAA-1332).